Consider the following 199-residue polypeptide: Hematopoietic prostaglandin D synthase (199 aa).

The GST N-terminal domain maps to 2 to 79; sequence PNYKLTYFNM…YLTKNTDLAG (78 aa). Glutathione is bound by residues tyrosine 8, arginine 14, tryptophan 39, 49–51, and 63–64; these read GKI and QS. Residues 81–199 form the GST C-terminal domain; the sequence is TEMEQCHVDA…WIKRRPQTKL (119 aa).

The protein belongs to the GST superfamily. Sigma family. Homodimer. Glutathione is required as a cofactor. Expressed in a number of megakaryocytic cell lines but not in platelets. Highly expressed in adipose tissue, macrophages and placenta. Also expressed at lower levels in lung, heart, lymph nodes, appendix, bone marrow and fetal liver.

It localises to the cytoplasm. The catalysed reaction is prostaglandin H2 = prostaglandin D2. The enzyme catalyses RX + glutathione = an S-substituted glutathione + a halide anion + H(+). It catalyses the reaction 2-glyceryl-prostaglandin H2 = 2-glyceryl-prostaglandin D2. With respect to regulation, prostaglandin PGD2 synthesis is stimulated by calcium and magnesium ions. One calcium or magnesium ion is bound between the subunits of the homodimer. The interactions with the protein are for the most part mediated via water molecules. Magnesium increases the affinity for glutathione, while calcium has no effect on the affinity for glutathione. Functionally, bifunctional enzyme which catalyzes both the conversion of PGH2 to PGD2, a prostaglandin involved in smooth muscle contraction/relaxation and a potent inhibitor of platelet aggregation, and the conjugation of glutathione with a wide range of aryl halides and organic isothiocyanates. Also exhibits low glutathione-peroxidase activity towards cumene hydroperoxide. The polypeptide is Hematopoietic prostaglandin D synthase (Homo sapiens (Human)).